We begin with the raw amino-acid sequence, 339 residues long: Zinc transporter 3 (339 aa).

An N-terminal signal peptide occupies residues 1-25 (MKTKNVKLLFFFFSVSLLLIAVVNA). Over 26–54 (AEGHSHGGPKCECSHEDDHENKAGARKYK) the chain is Extracellular. Residues 55-75 (IAAIPTVLIAGIIGVLFPLLG) form a helical membrane-spanning segment. Residues 76–86 (KVFPSLRPETC) lie on the Cytoplasmic side of the membrane. The helical transmembrane segment at 87-107 (FFFVTKAFAAGVILATGFMHV) threads the bilayer. The Extracellular portion of the chain corresponds to 108 to 123 (LPEAYEMLNSPCLTSE). A helical membrane pass occupies residues 124 to 144 (AWEFPFTGFIAMIAAILTLSV). Residues 145-184 (DTFATSSFYKSHCKASKRVSDGETGESSVDSEKVQILRTR) lie on the Cytoplasmic side of the membrane. The helical transmembrane segment at 185–205 (VIAQVLELGIIVHSVVIGISL) threads the bilayer. Topologically, residues 206–216 (GASQSPDAAKA) are extracellular. A helical transmembrane segment spans residues 217 to 237 (LFIALMFHQCFEGLGLGGCIA). At 238 to 247 (QGKFKCLSVT) the chain is on the cytoplasmic side. Residues 248-268 (IMSTFFAITTPIGIVVGMGIA) traverse the membrane as a helical segment. The Extracellular segment spans residues 269-278 (NSYDESSPTA). The chain crosses the membrane as a helical span at residues 279-299 (LIVQGVLNAASAGILIYMSLV). The Cytoplasmic portion of the chain corresponds to 300–315 (DLLAADFTHPKMQSNT). The helical transmembrane segment at 316–336 (GLQIMAHIALLLGAGLMSLLA) threads the bilayer. Residues 337–339 (KWA) are Extracellular-facing.

The protein belongs to the ZIP transporter (TC 2.A.5) family. Expressed predominantly in the roots of zinc-deficient plants.

Its subcellular location is the cell membrane. In terms of biological role, mediates zinc uptake from the rhizosphere. May also transport other divalent cations. The chain is Zinc transporter 3 (ZIP3) from Arabidopsis thaliana (Mouse-ear cress).